A 211-amino-acid polypeptide reads, in one-letter code: Thymidine kinase (211 aa).

ATP is bound by residues 9–16 and 87–90; these read STMNAGKS and DEAQ. The Proton acceptor role is filled by E88. Zn(2+)-binding residues include C145, C147, C182, and H185.

It belongs to the thymidine kinase family. Homotetramer.

Its subcellular location is the cytoplasm. The catalysed reaction is thymidine + ATP = dTMP + ADP + H(+). The chain is Thymidine kinase from Rhodopirellula baltica (strain DSM 10527 / NCIMB 13988 / SH1).